The primary structure comprises 743 residues: Phosphoribosylformylglycinamidine synthase subunit PurL (743 aa).

His-50 is an active-site residue. The ATP site is built by Tyr-53 and Lys-92. Glu-94 serves as a coordination point for Mg(2+). Substrate is bound by residues 95–98 (SHNH) and Arg-117. His-96 functions as the Proton acceptor in the catalytic mechanism. Asp-118 provides a ligand contact to Mg(2+). Gln-241 contributes to the substrate binding site. Residue Asp-269 participates in Mg(2+) binding. 313–315 (ESQ) lines the substrate pocket. ATP contacts are provided by Asp-495 and Gly-532. Asn-533 contributes to the Mg(2+) binding site. Position 535 (Ser-535) interacts with substrate.

It belongs to the FGAMS family. As to quaternary structure, monomer. Part of the FGAM synthase complex composed of 1 PurL, 1 PurQ and 2 PurS subunits.

Its subcellular location is the cytoplasm. It carries out the reaction N(2)-formyl-N(1)-(5-phospho-beta-D-ribosyl)glycinamide + L-glutamine + ATP + H2O = 2-formamido-N(1)-(5-O-phospho-beta-D-ribosyl)acetamidine + L-glutamate + ADP + phosphate + H(+). Its pathway is purine metabolism; IMP biosynthesis via de novo pathway; 5-amino-1-(5-phospho-D-ribosyl)imidazole from N(2)-formyl-N(1)-(5-phospho-D-ribosyl)glycinamide: step 1/2. Functionally, part of the phosphoribosylformylglycinamidine synthase complex involved in the purines biosynthetic pathway. Catalyzes the ATP-dependent conversion of formylglycinamide ribonucleotide (FGAR) and glutamine to yield formylglycinamidine ribonucleotide (FGAM) and glutamate. The FGAM synthase complex is composed of three subunits. PurQ produces an ammonia molecule by converting glutamine to glutamate. PurL transfers the ammonia molecule to FGAR to form FGAM in an ATP-dependent manner. PurS interacts with PurQ and PurL and is thought to assist in the transfer of the ammonia molecule from PurQ to PurL. The chain is Phosphoribosylformylglycinamidine synthase subunit PurL from Rhizobium etli (strain ATCC 51251 / DSM 11541 / JCM 21823 / NBRC 15573 / CFN 42).